The primary structure comprises 96 residues: Kunitz-type serine protease inhibitor C6 (96 aa).

The signal sequence occupies residues 1–24 (MSSGGLLLLLGFLTLWAELTPISG). Gln-25 bears the Pyrrolidone carboxylic acid mark. The BPTI/Kunitz inhibitor domain occupies 31–81 (CHLPADSGRCKAHIPRFYYNPASNQCQGFTYGGCGGNANNFETRDQCRHTC). Cystine bridges form between Cys-31-Cys-81, Cys-40-Cys-64, and Cys-56-Cys-77. Positions 85–96 (GNVGPRPRIASN) are excised as a propeptide.

Belongs to the venom Kunitz-type family. Expressed by the venom gland.

It is found in the secreted. Serine protease inhibitor. This is Kunitz-type serine protease inhibitor C6 from Daboia siamensis (Eastern Russel's viper).